We begin with the raw amino-acid sequence, 315 residues long: Aldo-keto reductase family 4 member C11 (315 aa).

Ala-2 carries the post-translational modification N-acetylalanine. NADP(+) contacts are provided by residues 23–24 (TW) and Asp-47. Residue Tyr-52 is the Proton donor of the active site. NADP(+)-binding positions include His-114, 158 to 159 (SN), Gln-180, 207 to 213 (SPLGSPG), 256 to 258 (KST), and 262 to 266 (RIREN). Ser-295 is modified (phosphoserine).

It belongs to the aldo/keto reductase family.

Functionally, oxidoreductase that may act on a broad range of substrates such as ketosteroids, aldehydes, ketones and sugars. The polypeptide is Aldo-keto reductase family 4 member C11 (AKR4C11) (Arabidopsis thaliana (Mouse-ear cress)).